The following is a 120-amino-acid chain: Flagellar protein FliT (120 aa).

Positions 1-50 (MNDSSLSLKKWHALSALSNTMLSLAQSGKWDELIEQEVAYVSLVEKISIT) are required for homodimerization. The fliD binding stretch occupies residues 59-97 (IQDQAMVMLNNVLQNEMTLKTLLQERMDELHGLMAQTGK).

Belongs to the FliT family. In terms of assembly, homodimer. Interacts with FliD and FlhC.

It localises to the cytoplasm. The protein resides in the cytosol. Its function is as follows. Dual-function protein that regulates the transcription of class 2 flagellar operons and that also acts as an export chaperone for the filament-capping protein FliD. As a transcriptional regulator, acts as an anti-FlhDC factor; it directly binds FlhC, thus inhibiting the binding of the FlhC/FlhD complex to class 2 promoters, resulting in decreased expression of class 2 flagellar operons. As a chaperone, effects FliD transition to the membrane by preventing its premature polymerization, and by directing it to the export apparatus. This chain is Flagellar protein FliT, found in Enterobacter sp. (strain 638).